Here is a 1362-residue protein sequence, read N- to C-terminus: MAYSYTEKKRIRKNFGKLPQVMDAPYLLSIQVDSYRTFLQDGKSPKNREDIGLQAAFRSVFPIESYSGNAALEFVEYSLGKPEFDVRECILRGSTYAAPMRVKIRLIIKDRETKSIKDVREQEVYMGEIPLMTENGTFVINGTERVIVSQLHRSPGVFFDHDKGKTHSSGKVLYSARIIPYRGSWLDFEFDAKDLVYVRIDRRRKLLATVVLRALGYNNEQILNLFYEKVPVYLDMGSYQIDLVPERLRGEMAQFDITDNEGKVIVEQGKRINARHVRQMEAAGLTKLSVPDEYLYERITAEDITLRDGEVIAANTLLSHEVMVKLAEGGVKQFNILFTNDIDRGSFVADTLRADLTRDREEALVEIYKVMRPGEPPTKEAAENLFNNLFFSSERYDLSPVGRMKFNRRLGRPYEVGTDQKSREVEGILSHEDIIDVLRTLVEIRNGKGEVDDIDHLGNRRVRSVGEMTENQFRVGLVRVERAVKERLSQAETDNLSPQDLINAKPVAAAIKEFFGSSQLSQFMDQNNPLSEITHKRRVSALGPGGLTRERAGFEVRDVHQTHYGRVCPIETPEGPNIGLINSLSVYAKANDFGFLETPYRKVVDGRVTDDVEYLSAIEEVGTVIAQADSAVDKDGNLTEEFVSVRHQGEFVRMPPEKVTHMDVSAQQVVSVAASLIPFLEHDDANRALMGSNMQRQAVPTLRADKPLVGTGMEANVARDSGVCVIANRGGVIEYVDASRIVIRVNEDEMVAGEAGVDIYNLIKYTRSNQNTCINQNVIVNLGDKVARGDILADGPSTDMGELALGQNMRVAFMTWNGYNYEDSILLSERVLQEDRLTSIHIQELSCVARDTKLGAEEITADIPNVGEAALSKLDESGIVYIGAEVTAGDILVGKVTPKGETQLTPEEKLLRAIFGEKAADVKDSSLRVPSGTKGTVIDVQVFTRDGLEKDDRALAIEKAQLDSYRKDLKEEYKIFEEAARERVIRLLKGQESNGGGSTKRGDKLSEDLLSGLELVDLLEIQPADEAIAERLTQIQVFLKEKSAEIDEKFAEKKRKLATGDELTTGVLKVVKVYLAVKRRIQPGDKMAGRHGNKGVVSNILPVEDMPHDANGVPVDIVLNPLGVPSRMNVGQILETHLGMAAKGLGDKIEKMLKEQRTVLELREFLDKIYNKVGGEQEDLDSLTDEEILALAGNLRAGVPLATPVFDGAEESQIKDLLELADISRTGQTVLFDGRTGEQFDRPVTVGYMYMLKLNHLVDDKMHARSTGSYSLVTQQPLGGKAQFGGQRFGEMEVWALEAYGAAYTLQEMLTVKSDDVEGRTRIYKNIVDGNHYMDPGMPESFNVLTKEIRSLGINIELKNGD.

Belongs to the RNA polymerase beta chain family. The RNAP catalytic core consists of 2 alpha, 1 beta, 1 beta' and 1 omega subunit. When a sigma factor is associated with the core the holoenzyme is formed, which can initiate transcription.

The enzyme catalyses RNA(n) + a ribonucleoside 5'-triphosphate = RNA(n+1) + diphosphate. Its function is as follows. DNA-dependent RNA polymerase catalyzes the transcription of DNA into RNA using the four ribonucleoside triphosphates as substrates. This is DNA-directed RNA polymerase subunit beta from Acinetobacter baumannii (strain AB307-0294).